The primary structure comprises 435 residues: GTPase Der (435 aa).

EngA-type G domains lie at 8-169 (NLVA…NFEN) and 176-351 (FKIA…NNLS). Residues 14 to 21 (GKPNVGKS), 61 to 65 (DTGGI), 123 to 126 (NKLD), 182 to 189 (GKPNAGKS), 229 to 233 (DTAGI), and 294 to 297 (NKWD) each bind GTP. The region spanning 352–435 (REIKQNLLND…PINLVLKKNK (84 aa)) is the KH-like domain.

The protein belongs to the TRAFAC class TrmE-Era-EngA-EngB-Septin-like GTPase superfamily. EngA (Der) GTPase family. Associates with the 50S ribosomal subunit.

Functionally, GTPase that plays an essential role in the late steps of ribosome biogenesis. This Mycoplasmopsis pulmonis (strain UAB CTIP) (Mycoplasma pulmonis) protein is GTPase Der.